Here is a 381-residue protein sequence, read N- to C-terminus: Protein kinase gsk31 (381 aa).

One can recognise a Protein kinase domain in the interval 25–309; the sequence is YEPCRVLGSG…AIEVLTHPFF (285 aa). Residues 31 to 39 and Lys54 contribute to the ATP site; that span reads LGSGSFGVV. Catalysis depends on Asp150, which acts as the Proton acceptor. Residue Ser184 is modified to Phosphoserine. Tyr185 carries the phosphotyrosine modification.

This sequence belongs to the protein kinase superfamily. CMGC Ser/Thr protein kinase family. GSK-3 subfamily.

The enzyme catalyses L-seryl-[protein] + ATP = O-phospho-L-seryl-[protein] + ADP + H(+). It carries out the reaction L-threonyl-[protein] + ATP = O-phospho-L-threonyl-[protein] + ADP + H(+). This Schizosaccharomyces pombe (strain 972 / ATCC 24843) (Fission yeast) protein is Protein kinase gsk31 (gsk31).